The chain runs to 188 residues: Elongation factor P (188 aa).

The protein belongs to the elongation factor P family.

It is found in the cytoplasm. It participates in protein biosynthesis; polypeptide chain elongation. Its function is as follows. Involved in peptide bond synthesis. Stimulates efficient translation and peptide-bond synthesis on native or reconstituted 70S ribosomes in vitro. Probably functions indirectly by altering the affinity of the ribosome for aminoacyl-tRNA, thus increasing their reactivity as acceptors for peptidyl transferase. The chain is Elongation factor P from Rickettsia peacockii (strain Rustic).